Consider the following 367-residue polypeptide: Calcium uniporter protein, mitochondrial (367 aa).

The N-terminal 12 residues, 1–12, are a transit peptide targeting the mitochondrion; sequence MAMPRVLCRVRL. The Mitochondrial matrix segment spans residues 13–232; it reads LIHNDFSVIS…LEEKKLELEQ (220 aa). Residues 61 to 80 form a disordered region; that stretch reads KQDASSSSSDSDSSDSDEDD. A coiled-coil region spans residues 199 to 233; that stretch reads REHQLQKEVELTTQLETLQQELLPLEEKKLELEQV. The chain crosses the membrane as a helical span at residues 233–253; it reads VANRRSNWMAWAGLGLMSVQF. Topologically, residues 254-262 are mitochondrial intermembrane; it reads GILARLTWW. Residues 263 to 284 form a helical membrane-spanning segment; the sequence is EYSWDIMEPVTYFVTYGTAMAA. A Selectivity filter motif is present at residues 266–276; it reads WDIMEPVTYFV. Glutamate 270 is a binding site for Ca(2+). The Mitochondrial matrix segment spans residues 285-367; that stretch reads YAYFVLTREE…KKQVEEKAKE (83 aa).

The protein belongs to the MCU (TC 1.A.77) family. As to quaternary structure, homotetramer. Component of the uniplex complex, composed of MCU, EMRE, MICU1 and MICU2 in a 4:4:1:1 stoichiometry.

It is found in the mitochondrion inner membrane. It carries out the reaction Ca(2+)(in) = Ca(2+)(out). MCU channel activity is regulated by the heterodimer composed of MICU1 and MICU2, which act as calcium-sensors. At low calcium levels, MICU1 occludes the pore of the MCU channel, preventing mitochondrial calcium uptake. At higher calcium levels, calcium-binding to MICU1 and MICU2 induces a conformational change that weakens MCU-MICU1 interactions and moves the MICU1-MICU2 heterodimer away from the pore, allowing calcium permeation through the channel. Channel-forming and calcium-conducting subunit of the mitochondrial inner membrane calcium uniporter complex (uniplex), which mediates calcium uptake into the mitochondrial matrix. MCU channel activity is regulated by the calcium-sensor subunits of the uniplex MICU1 and MICU2. Mitochondrial calcium homeostasis plays key roles in cellular physiology and regulates ATP production, cytoplasmic calcium signals and activation of cell death pathways. The sequence is that of Calcium uniporter protein, mitochondrial from Tribolium castaneum (Red flour beetle).